The sequence spans 339 residues: Photosystem II assembly lipoprotein Ycf48 (339 aa).

The first 23 residues, 1–23 (MNRLIKFSFNLILIFVLGLGLSG), serve as a signal peptide directing secretion. Residue C24 is the site of N-palmitoyl cysteine attachment. C24 is lipidated: S-diacylglycerol cysteine.

This sequence belongs to the Ycf48 family. Part of early PSII assembly complexes which includes D1 (psbA) and PsbI; not found in mature PSII. Binds to the lumenal side of PSII complexes. Interacts with YidC.

It localises to the cellular thylakoid membrane. A factor required for optimal assembly of photosystem II (PSII), acting in the early stages of PSII assembly. Also plays a role in replacement of photodamaged D1 (psbA). Assists YidC in synthesis of chlorophyll-binding proteins. The chain is Photosystem II assembly lipoprotein Ycf48 from Prochlorococcus marinus (strain SARG / CCMP1375 / SS120).